Here is a 314-residue protein sequence, read N- to C-terminus: tRNA dimethylallyltransferase (314 aa).

10 to 17 contacts ATP; the sequence is GPTGVGKT. Position 12–17 (12–17) interacts with substrate; sequence TGVGKT. An interaction with substrate tRNA region spans residues 35-38; that stretch reads DSMQ.

This sequence belongs to the IPP transferase family. In terms of assembly, monomer. Requires Mg(2+) as cofactor.

The catalysed reaction is adenosine(37) in tRNA + dimethylallyl diphosphate = N(6)-dimethylallyladenosine(37) in tRNA + diphosphate. Its function is as follows. Catalyzes the transfer of a dimethylallyl group onto the adenine at position 37 in tRNAs that read codons beginning with uridine, leading to the formation of N6-(dimethylallyl)adenosine (i(6)A). The polypeptide is tRNA dimethylallyltransferase (Finegoldia magna (strain ATCC 29328 / DSM 20472 / WAL 2508) (Peptostreptococcus magnus)).